The chain runs to 293 residues: Elongation factor Ts (293 aa).

Residues 80–83 (TDFV) are involved in Mg(2+) ion dislocation from EF-Tu.

This sequence belongs to the EF-Ts family.

Its subcellular location is the cytoplasm. In terms of biological role, associates with the EF-Tu.GDP complex and induces the exchange of GDP to GTP. It remains bound to the aminoacyl-tRNA.EF-Tu.GTP complex up to the GTP hydrolysis stage on the ribosome. This chain is Elongation factor Ts, found in Staphylococcus aureus (strain USA300).